The following is a 476-amino-acid chain: Aspartyl/glutamyl-tRNA(Asn/Gln) amidotransferase subunit B (476 aa).

Belongs to the GatB/GatE family. GatB subfamily. Heterotrimer of A, B and C subunits.

It carries out the reaction L-glutamyl-tRNA(Gln) + L-glutamine + ATP + H2O = L-glutaminyl-tRNA(Gln) + L-glutamate + ADP + phosphate + H(+). It catalyses the reaction L-aspartyl-tRNA(Asn) + L-glutamine + ATP + H2O = L-asparaginyl-tRNA(Asn) + L-glutamate + ADP + phosphate + 2 H(+). Functionally, allows the formation of correctly charged Asn-tRNA(Asn) or Gln-tRNA(Gln) through the transamidation of misacylated Asp-tRNA(Asn) or Glu-tRNA(Gln) in organisms which lack either or both of asparaginyl-tRNA or glutaminyl-tRNA synthetases. The reaction takes place in the presence of glutamine and ATP through an activated phospho-Asp-tRNA(Asn) or phospho-Glu-tRNA(Gln). This is Aspartyl/glutamyl-tRNA(Asn/Gln) amidotransferase subunit B from Clostridium botulinum (strain Eklund 17B / Type B).